The primary structure comprises 176 residues: Ferritin heavy chain B (176 aa).

The region spanning 7-156 (QNFNSDCEAA…DYITNLKRLG (150 aa)) is the Ferritin-like diiron domain. Fe cation is bound by residues Glu24, Glu59, His62, Glu104, and Gln138.

It belongs to the ferritin family. In terms of assembly, oligomer of 24 subunits. There are two types of subunits: L (light) chain and H (heavy) chain. The functional molecule is roughly spherical and contains a central cavity into which the insoluble mineral iron core is deposited.

It localises to the cytoplasm. It carries out the reaction 4 Fe(2+) + O2 + 4 H(+) = 4 Fe(3+) + 2 H2O. Its function is as follows. Stores iron in a soluble, non-toxic, readily available form. Important for iron homeostasis. Has ferroxidase activity. Iron is taken up in the ferrous form and deposited as ferric hydroxides after oxidation. The protein is Ferritin heavy chain B (fth1-b) of Xenopus laevis (African clawed frog).